The following is an 855-amino-acid chain: Beclin-1-like protein B (855 aa).

Disordered stretches follow at residues 92 to 212 (FGKR…GSLS), 236 to 271 (LVADINNNNNSVNKDNNTTISSSTVTTSNSISESNN), 294 to 380 (ATIP…QKPR), and 407 to 475 (VDGG…QQQP). 2 stretches are compositionally biased toward low complexity: residues 99–123 (TQSNSTTPTTPATPTATPTSSSLSL) and 131–143 (QQQQQQQQQQQQT). A compositionally biased stretch (polar residues) spans 144–156 (FNDQSKLTATTPT). A compositionally biased stretch (low complexity) spans 177-200 (HSNNSSNGSDHGGNVNTTGVSPSS). Low complexity predominate over residues 294–348 (ATIPTTTTTSTPTTPSTVGGTTPSPPSSSSSSSSSSSVITSPISRISPSNITSPS). Polar residues-rich tracts occupy residues 368–377 (LNISQVSSPQ) and 413–445 (SGTESTSMTNHHSSFLNQSTLPLGSSPVQTTPP). Low complexity predominate over residues 446–474 (LLSNSMNNSTNNLQSLQQQQQQQQQQQQQ). A coiled-coil region spans residues 538–595 (EKGKTEEDLEELGKEMTLLCEEEEQLRLMIENTHQERKEVEQLTLQLQDRIATLKSLE). The disordered stretch occupies residues 826 to 855 (LNNNQNNNNINNNNNNNINNNNNNNVNKRN).

Belongs to the beclin family.

It is found in the endosome membrane. Functionally, involved in autophagy. May be required to recruit the atg8-phosphatidylinositol conjugate and the atg12-atg5 conjugate to the pre-autophagosomal structure. This Dictyostelium discoideum (Social amoeba) protein is Beclin-1-like protein B (atg6B).